The following is a 50-amino-acid chain: Photosystem II reaction center protein M (50 aa).

A helical membrane pass occupies residues 7–27 (GFVASLLFVGIPTIFLIGLFI).

The protein belongs to the PsbM family. PSII is composed of 1 copy each of membrane proteins PsbA, PsbB, PsbC, PsbD, PsbE, PsbF, PsbH, PsbI, PsbJ, PsbK, PsbL, PsbM, PsbT, PsbX, PsbY, Psb30/Ycf12, peripheral proteins PsbO, CyanoQ (PsbQ), PsbU, PsbV and a large number of cofactors. It forms dimeric complexes.

It is found in the cellular thylakoid membrane. Its function is as follows. One of the components of the core complex of photosystem II (PSII). PSII is a light-driven water:plastoquinone oxidoreductase that uses light energy to abstract electrons from H(2)O, generating O(2) and a proton gradient subsequently used for ATP formation. It consists of a core antenna complex that captures photons, and an electron transfer chain that converts photonic excitation into a charge separation. This subunit is found at the monomer-monomer interface. The sequence is that of Photosystem II reaction center protein M from Prochlorococcus marinus subsp. pastoris (strain CCMP1986 / NIES-2087 / MED4).